Here is a 946-residue protein sequence, read N- to C-terminus: DNA primase (946 aa).

The interval Arg596–Thr626 is disordered. The segment covering Phe617–Thr626 has biased composition (polar residues). The CHC2-type zinc finger occupies Cys881 to Cys920.

It belongs to the herpesviridae DNA primase family. As to quaternary structure, associates with the helicase and the primase-associated factor to form the helicase-primase factor.

The protein resides in the host nucleus. In terms of biological role, essential component of the helicase/primase complex. Unwinds the DNA at the replication forks and generates single-stranded DNA for both leading and lagging strand synthesis. The primase initiates primer synthesis and thereby produces large amount of short RNA primers on the lagging strand that the polymerase elongates using dNTPs. The chain is DNA primase (UL70) from Human cytomegalovirus (strain Merlin) (HHV-5).